Here is a 300-residue protein sequence, read N- to C-terminus: Epimerase family protein SACOL0834 (300 aa).

The protein belongs to the NAD(P)-dependent epimerase/dehydratase family. SDR39U1 subfamily.

The protein is Epimerase family protein SACOL0834 of Staphylococcus aureus (strain COL).